The sequence spans 252 residues: tRNA uridine(34) hydroxylase (252 aa).

The Rhodanese domain maps to 129–223; it reads QGRPVVMLDT…YFEETGGKGF (95 aa). Catalysis depends on C183, which acts as the Cysteine persulfide intermediate.

This sequence belongs to the TrhO family.

It catalyses the reaction uridine(34) in tRNA + AH2 + O2 = 5-hydroxyuridine(34) in tRNA + A + H2O. Its function is as follows. Catalyzes oxygen-dependent 5-hydroxyuridine (ho5U) modification at position 34 in tRNAs. This is tRNA uridine(34) hydroxylase from Bordetella petrii (strain ATCC BAA-461 / DSM 12804 / CCUG 43448).